We begin with the raw amino-acid sequence, 133 residues long: MINSRLAVAIHILSLISMDEKTSSEIIADSVNTNPVVVRRMISLLKKADILTSRAGVPGASLKKDPADISLLEVYRAVQKQEELFAVHENPNPKCPVGKKIQNALDETFESVQRAMENELASKSLKDVMNHLF.

In terms of domain architecture, HTH rrf2-type spans 1-130; the sequence is MINSRLAVAI…ASKSLKDVMN (130 aa). The segment at residues 24-47 is a DNA-binding region (H-T-H motif); the sequence is SEIIADSVNTNPVVVRRMISLLKK.

The protein is Putative HTH-type transcriptional regulator YwnA (ywnA) of Bacillus subtilis (strain 168).